Reading from the N-terminus, the 174-residue chain is Thiol-disulfide oxidoreductase ResA (174 aa).

The chain crosses the membrane as a helical; Signal-anchor for type II membrane protein span at residues 11-30 (TAILLVLLAAIGYTIYTNFF). A Thioredoxin domain is found at 36–174 (VAVGSTAPDF…IERHLESIKP (139 aa)). Cys74 and Cys77 are disulfide-bonded.

This sequence belongs to the thioredoxin family. ResA subfamily.

It localises to the cell membrane. It participates in protein modification; cytochrome c assembly. Thiol-disulfide oxidoreductase which is required in disulfide reduction during c-type cytochrome synthesis. May accept reducing equivalents from CcdA, leading to breakage of disulfide bonds in apocytochrome c; following this reduction heme can be covalently attached. The protein is Thiol-disulfide oxidoreductase ResA of Geobacillus kaustophilus (strain HTA426).